Reading from the N-terminus, the 97-residue chain is MVQKPHSFRRKTRKKLRKHPRRRGLPPLTRFLQEFEVGQKVHIVIEPSYHKGMPDPRFHGRTGTVVGKRGDAYIVEVPDGNKVKTLFIHPVHLRPQK.

The segment covering 1–24 (MVQKPHSFRRKTRKKLRKHPRRRG) has biased composition (basic residues). Residues 1–25 (MVQKPHSFRRKTRKKLRKHPRRRGL) form a disordered region.

It belongs to the eukaryotic ribosomal protein eL21 family.

The protein is Large ribosomal subunit protein eL21 (rpl21e) of Pyrococcus horikoshii (strain ATCC 700860 / DSM 12428 / JCM 9974 / NBRC 100139 / OT-3).